We begin with the raw amino-acid sequence, 443 residues long: MAARKCGAPPIAADGSTRRPDCVTAVRTQARAPTQHYAESVARRQRVLTITAWLAVVVTGSFALMQLATGAGGWYIALINVFTAVTFAIVPLLHRFGGLVAPLTFIGTAYVAIFAIGWDVGTDAGAQFFFLVAAALVVLLVGIEHTALAVGLAAVAAGLVIALEFLVPPDTGLQPPWAMSVSFVLTTVSACGVAVATVWFALRDTARAEAVMEAEHDRSEALLANMLPASIAERLKEPERNIIADKYDEASVLFADIVGFTERASSTAPADLVRFLDRLYSAFDELVDQHGLEKIKVSGDSYMVVSGVPRPRPDHTQALADFALDMTNVAAQLKDPRGNPVPLRVGLATGPVVAGVVGSRRFFYDVWGDAVNVASRMESTDSVGQIQVPDEVYERLKDDFVLRERGHINVKGKGVMRTWYLIGRKVAADPGEVRGAEPRTAGV.

6 consecutive transmembrane segments (helical) span residues 47–69, 74–93, 98–120, 124–143, 148–167, and 180–202; these read VLTI…QLAT, WYIA…VPLL, GLVA…GWDV, AGAQ…LVGI, LAVG…EFLV, and SVSF…WFAL. Topologically, residues 203–443 are cytoplasmic; sequence RDTARAEAVM…RGAEPRTAGV (241 aa). The Guanylate cyclase domain maps to 251–378; that stretch reads SVLFADIVGF…DAVNVASRME (128 aa). Residues aspartate 256 and aspartate 300 each coordinate Mg(2+).

Belongs to the adenylyl cyclase class-4/guanylyl cyclase family. In terms of assembly, homodimer. Can also exist as monomer. The cofactor is Mg(2+). Mn(2+) serves as cofactor.

The protein resides in the cell membrane. The enzyme catalyses ATP = 3',5'-cyclic AMP + diphosphate. This is Adenylate cyclase (cya) from Mycobacterium bovis (strain ATCC BAA-935 / AF2122/97).